We begin with the raw amino-acid sequence, 73 residues long: Aminopeptidase G (73 aa).

The interval 39–73 is disordered; the sequence is GRRAASSSWPGRGSSRRWRPGRRTGAAARGCWRAP. Composition is skewed to low complexity over residues 42–51 and 61–73; these read AASSSWPGRG and RTGA…WRAP.

It belongs to the peptidase M1 family. The cofactor is Zn(2+).

Its subcellular location is the cytoplasm. Functionally, hydrolyzes preferentially the N-terminal glycine and can also hydrolyze other amino acids which are used by PepN but is unable to hydrolyze basic amino acids. In Streptomyces lividans, this protein is Aminopeptidase G (pepG).